Reading from the N-terminus, the 300-residue chain is 33 kDa chaperonin (300 aa).

Intrachain disulfides connect C235–C237 and C269–C272.

It belongs to the HSP33 family. In terms of processing, under oxidizing conditions two disulfide bonds are formed involving the reactive cysteines. Under reducing conditions zinc is bound to the reactive cysteines and the protein is inactive.

Its subcellular location is the cytoplasm. Functionally, redox regulated molecular chaperone. Protects both thermally unfolding and oxidatively damaged proteins from irreversible aggregation. Plays an important role in the bacterial defense system toward oxidative stress. This chain is 33 kDa chaperonin, found in Pseudomonas fluorescens (strain Pf0-1).